The primary structure comprises 117 residues: Large ribosomal subunit protein bL20c (117 aa).

Belongs to the bacterial ribosomal protein bL20 family.

The protein resides in the plastid. The protein localises to the chloroplast. In terms of biological role, binds directly to 23S ribosomal RNA and is necessary for the in vitro assembly process of the 50S ribosomal subunit. It is not involved in the protein synthesizing functions of that subunit. This chain is Large ribosomal subunit protein bL20c, found in Vitis vinifera (Grape).